The following is a 74-amino-acid chain: U4-theraphotoxin-Cg1a (74 aa).

The signal sequence occupies residues 1–19 (MNATIFAFLLLLNLAMHNA). The propeptide occupies 20-39 (TEQSSETDMDDTLLIPEINR). Disulfide bonds link cysteine 42-cysteine 56, cysteine 49-cysteine 61, and cysteine 55-cysteine 71.

This sequence belongs to the neurotoxin 36 family. 01 subfamily. As to expression, expressed by the venom gland.

The protein localises to the secreted. In terms of biological role, probable ion channel inhibitor. This is U4-theraphotoxin-Cg1a from Chilobrachys guangxiensis (Chinese earth tiger tarantula).